We begin with the raw amino-acid sequence, 299 residues long: Ribosomal RNA small subunit methyltransferase H (299 aa).

Residues 35–37 (GGH), Asp-54, Tyr-80, Asp-101, and Gln-108 contribute to the S-adenosyl-L-methionine site.

This sequence belongs to the methyltransferase superfamily. RsmH family.

The protein localises to the cytoplasm. The enzyme catalyses cytidine(1402) in 16S rRNA + S-adenosyl-L-methionine = N(4)-methylcytidine(1402) in 16S rRNA + S-adenosyl-L-homocysteine + H(+). Specifically methylates the N4 position of cytidine in position 1402 (C1402) of 16S rRNA. The sequence is that of Ribosomal RNA small subunit methyltransferase H from Coprothermobacter proteolyticus (strain ATCC 35245 / DSM 5265 / OCM 4 / BT).